The sequence spans 166 residues: Monothiol glutaredoxin-3 (166 aa).

The 104-residue stretch at 56–159 folds into the Glutaredoxin domain; it reads DSTDFEVFLE…STLDEWTHNK (104 aa). Cys-76 is a [2Fe-2S] cluster binding site.

The protein belongs to the glutaredoxin family. Monothiol subfamily. As to quaternary structure, homodimer.

It localises to the nucleus. In terms of biological role, monothiol glutaredoxin involved in the biogenesis of iron-sulfur clusters. Binds one iron-sulfur cluster per dimer. The iron-sulfur cluster is bound between subunits, and is complexed by a bound glutathione and a cysteine residue from each subunit. The chain is Monothiol glutaredoxin-3 (grx3) from Schizosaccharomyces pombe (strain 972 / ATCC 24843) (Fission yeast).